The primary structure comprises 105 residues: uncharacterized protein (105 aa).

At 1–48 the chain is on the extracellular side; it reads MAPKAFFVCLPWVLPRHALIVRQAGNPYHFLAYTNPRAPGKLQDSHCP. The chain crosses the membrane as a helical span at residues 49-69; sequence VFFMGIIIITIITVTLAIIII. A topological domain (cytoplasmic) is located at residue Asn70. The helical transmembrane segment at 71–91 threads the bilayer; that stretch reads IIFLTLFDDGMCFYCSLLTFS. The Extracellular portion of the chain corresponds to 92-105; it reads FVSFNFDHFDHFDL.

The protein localises to the membrane. This is an uncharacterized protein from Saccharomyces cerevisiae (strain ATCC 204508 / S288c) (Baker's yeast).